The following is a 263-amino-acid chain: Fructose-bisphosphate aldolase class 1 (263 aa).

Residues 24-25 (DH), His-29, Asp-33, and Trp-144 contribute to the substrate site. The active-site Proton donor is Tyr-146. Substrate is bound by residues Arg-148, 177 to 179 (KIK), 202 to 204 (SGG), and 231 to 232 (GR). Lys-177 acts as the Schiff-base intermediate with dihydroxyacetone-P in catalysis.

This sequence belongs to the DeoC/FbaB aldolase family. Homodecamer (dimer of pentamers).

It is found in the cytoplasm. The catalysed reaction is beta-D-fructose 1,6-bisphosphate = D-glyceraldehyde 3-phosphate + dihydroxyacetone phosphate. Its activity is regulated as follows. Activated by citrate. In terms of biological role, catalyzes the reversible cleavage of fructose 1,6-bisphosphate (FBP) to glyceraldehyde 3-phosphate (GAP) and dihydroxyacetone phosphate (DHAP). In Thermoproteus tenax (strain ATCC 35583 / DSM 2078 / JCM 9277 / NBRC 100435 / Kra 1), this protein is Fructose-bisphosphate aldolase class 1 (fba).